Here is a 328-residue protein sequence, read N- to C-terminus: RNA-binding motif protein, X-linked 2 (328 aa).

A Glycyl lysine isopeptide (Lys-Gly) (interchain with G-Cter in SUMO2) cross-link involves residue lysine 8. The region spanning 36–114 (AWIFLGGLPY…RTIRVDHVAN (79 aa)) is the RRM domain. The segment at 118-328 (PQESEDVDDV…SFHASDRRHY (211 aa)) is disordered. Residue threonine 140 is modified to Phosphothreonine. Serine 149 carries the post-translational modification Phosphoserine. The span at 157 to 172 (TKKPKKDKKEKKKKKE) shows a compositional bias: basic residues. Basic and acidic residues-rich tracts occupy residues 192–219 (TVKETDEQSAKKHSSKPSERAQKSECRE), 236–247 (GRAEEPEWEAKK), and 255–273 (KPSSRREGEEKSRDKDRGR). Residue lysine 246 forms a Glycyl lysine isopeptide (Lys-Gly) (interchain with G-Cter in SUMO2) linkage. Serine 274 carries the phosphoserine modification. Positions 291 to 314 (HRSRSRSRSRSPDRSHRHKKHRYS) are enriched in basic residues. Residues 315 to 328 (HERESFHASDRRHY) show a composition bias toward basic and acidic residues.

Belongs to the IST3 family. Part of the activated spliceosome B/catalytic step 1 spliceosome, one of the forms of the spliceosome which has a well-formed active site but still cannot catalyze the branching reaction and is composed of at least 52 proteins, the U2, U5 and U6 snRNAs and the pre-mRNA. Component of the minor spliceosome, which splices U12-type introns.

It localises to the nucleus. In terms of biological role, involved in pre-mRNA splicing as component of the activated spliceosome. As a component of the minor spliceosome, involved in the splicing of U12-type introns in pre-mRNAs. The chain is RNA-binding motif protein, X-linked 2 (Rbmx2) from Rattus norvegicus (Rat).